A 3567-amino-acid polypeptide reads, in one-letter code: Erythronolide synthase EryA2 (3567 aa).

A Ketosynthase family 3 (KS3) 1 domain is found at 30–455; sequence SDPIAIVSMA…GTNAHVIVEE (426 aa). 2 module regions span residues 33–1467 and 1491–3485; these read IAIV…QHLR and IAIV…EHLR. Cys202 serves as the catalytic Acyl-thioester intermediate; for beta-ketoacyl synthase 1 activity. Catalysis depends on for beta-ketoacyl synthase 1 activity residues His337 and His377. An acyltransferase 1 region spans residues 560-880; that stretch reads VFLFPGQGSQ…MATAHVSGVD (321 aa). Residue Ser651 is the Acyl-ester intermediate; for acyltransferase 1 activity of the active site. Residues 1132 to 1297 are C2-type beta-ketoacyl reductase 1; the sequence is GTVLVTGAAS…CTSVAWTPWA (166 aa). Tyr1267 acts as the For C2-type beta-ketoacyl reductase 1 and probable racemase activity in catalysis. Residues 1364-1385 form a disordered region; that stretch reads GRGGQAEAEPDSGPTGEPAQRL. The 76-residue stretch at 1395–1470 folds into the Carrier 1 domain; the sequence is ENLLELVANA…ALAQHLRARL (76 aa). Residue Ser1430 is modified to O-(pantetheine 4'-phosphoryl)serine. Residues 1488–1912 form the Ketosynthase family 3 (KS3) 2 domain; it reads SEPIAIVGIG…GTNAHVIVEE (425 aa). Cys1661 (acyl-thioester intermediate; for beta-ketoacyl synthase 2 activity) is an active-site residue. Catalysis depends on for beta-ketoacyl synthase 2 activity residues His1796 and His1834. Residues 2015-2331 are acyltransferase 2; the sequence is LVFPGQGAQW…NLLRAHVHGV (317 aa). Ser2105 serves as the catalytic Acyl-ester intermediate; for acyltransferase 2 activity. An N-terminal hotdog fold region spans residues 2377 to 2502; that stretch reads HPLLLAAVDV…GTLAQGVAAG (126 aa). A dehydratase region spans residues 2377–2645; that stretch reads HPLLLAAVDV…SLVVRSTGEK (269 aa). The PKS/mFAS DH domain maps to 2377–2648; that stretch reads HPLLLAAVDV…VRSTGEKWEQ (272 aa). His2409 (proton acceptor; for dehydratase activity) is an active-site residue. The C-terminal hotdog fold stretch occupies residues 2514–2648; it reads AVRIPLDDHY…VRSTGEKWEQ (135 aa). Asp2571 acts as the Proton donor; for dehydratase activity in catalysis. Residues 2831-3131 form an enoyl reductase region; the sequence is GAIDSVAFEP…RGRHVGKLVL (301 aa). Tyr2874 functions as the For enoyl reductase activity in the catalytic mechanism. NADP(+) is bound by residues 2964–2973, 3149–3152, 3173–3176, 3202–3203, Lys3250, and 3272–3273; these read HAAAGGVGMA, TGTL, SRRG, DT, and FS. Residues 3141-3317 form a beta-ketoacyl reductase 2 region; that stretch reads GTVLITGGTG…AKALGWGLWA (177 aa). The For beta-ketoacyl reductase 2 activity role is filled by Tyr3287. In terms of domain architecture, Carrier 2 spans 3413 to 3488; that stretch reads AGLAELVRSH…AVAEHLRDRL (76 aa). Ser3448 is subject to O-(pantetheine 4'-phosphoryl)serine.

Homodimer. Erythronolide synthase is composed of EryAI, EryAII and EryAIII multimodular (2 modules) polypeptides each coding for a functional synthase subunit which participates in 2 of the six FAS-like elongation steps required for formation of the polyketide. Module 1, 2, 3, 4, 5, and 6 participating in biosynthesis steps 1, 2, 3, 4, 5, and 6, respectively. Pantetheine 4'-phosphate serves as cofactor.

The enzyme catalyses 6 (S)-methylmalonyl-CoA + propanoyl-CoA + 6 NADPH + 12 H(+) = 6-deoxyerythronolide B + 6 CO2 + 6 NADP(+) + 7 CoA + H2O. It participates in antibiotic biosynthesis; erythromycin biosynthesis. Its function is as follows. Involved in the biosynthesis of antibiotic erythromycin via the biosynthesis of its aglycone precursor, 6-deoxyerythronolide B (6-dEB). This Saccharopolyspora erythraea (Streptomyces erythraeus) protein is Erythronolide synthase EryA2.